Consider the following 133-residue polypeptide: Fatty acid-binding protein homolog 2 (133 aa).

Residues R107 and 127 to 129 contribute to the a fatty acid site; that span reads RTY.

The protein belongs to the calycin superfamily. Fatty-acid binding protein (FABP) family.

Functionally, may play a role in the acquisition, storage, and transport of lipids, and may be important to the organism since it is incapable of synthesizing most of its lipids de novo. This Echinococcus granulosus (Hydatid tapeworm) protein is Fatty acid-binding protein homolog 2 (FABP2).